The chain runs to 209 residues: Ribosomal RNA small subunit methyltransferase G (209 aa).

Residues glycine 71, phenylalanine 76, 122–123 (AE), and arginine 135 contribute to the S-adenosyl-L-methionine site.

The protein belongs to the methyltransferase superfamily. RNA methyltransferase RsmG family.

It is found in the cytoplasm. Functionally, specifically methylates the N7 position of a guanine in 16S rRNA. The polypeptide is Ribosomal RNA small subunit methyltransferase G (Phocaeicola vulgatus (strain ATCC 8482 / DSM 1447 / JCM 5826 / CCUG 4940 / NBRC 14291 / NCTC 11154) (Bacteroides vulgatus)).